Consider the following 286-residue polypeptide: MAKLRPYYEESQSAYDISDDFFALFLDPTWVYTCAYFERDDMTLEEAQLAKVDLALDKLNLEPGMTLLDVGCGWGGALVRAVEKYDVNVIGLTLSRNHYERSKDRLAAIGTQRRAEARLQGWEEFEENVDRIVSFEAFDAFKKERYLTFFERSYDILPDDGRMLLHSLFTYDRRWLHEQGIALTMSDLRFLKFLRESIFPGGELPSEPDIVDNAQAAGFTIEHVQLLQQHYARTLDAWAANLQAARERAIAVQSEEVYNNFMHYLTGCAERFRRGLINVAQFTMTK.

S-adenosyl-L-methionine contacts are provided by residues 32-33 (YT), 71-73 (GCG), 93-98 (TLSRNH), and 122-123 (WE). Cys268 is a catalytic residue.

Belongs to the CFA/CMAS family.

It functions in the pathway lipid metabolism; mycolic acid biosynthesis. Its function is as follows. Involved in the conversion of a cis-olefin into a trans-olefin with concomitant introduction of an allylic methyl branch at the proximal position of the precursor to both the methoxy and ketomycolic acids. It directly affects the cis- to trans ratio and indirectly affects the keto to methoxy ratio. This Mycobacterium bovis (strain ATCC BAA-935 / AF2122/97) protein is Mycolic acid methyltransferase MmaA1 (cmaD).